Here is a 162-residue protein sequence, read N- to C-terminus: Small ribosomal subunit protein uS5 (162 aa).

The region spanning 11 to 74 is the S5 DRBM domain; that stretch reads LTDRVVHISR…EQAKKNLIKV (64 aa).

This sequence belongs to the universal ribosomal protein uS5 family. As to quaternary structure, part of the 30S ribosomal subunit. Contacts proteins S4 and S8.

Functionally, with S4 and S12 plays an important role in translational accuracy. Located at the back of the 30S subunit body where it stabilizes the conformation of the head with respect to the body. The chain is Small ribosomal subunit protein uS5 from Pelobacter propionicus (strain DSM 2379 / NBRC 103807 / OttBd1).